We begin with the raw amino-acid sequence, 174 residues long: Cathepsin B-like cysteine proteinase 3 (174 aa).

2 disulfides stabilise this stretch: cysteine 22–cysteine 55 and cysteine 30–cysteine 42. Catalysis depends on residues histidine 122 and asparagine 142.

This sequence belongs to the peptidase C1 family.

Expression of the protease correlates with blood-feeding and suggests a role for the protease in blood digestion. This chain is Cathepsin B-like cysteine proteinase 3 (CP-3), found in Ostertagia ostertagi (Brown stomach worm).